Reading from the N-terminus, the 550-residue chain is Chaperonin GroEL (550 aa).

Residues 29–32 (TAGP), K50, 86–90 (DGTTT), G416, and D498 each bind ATP.

Belongs to the chaperonin (HSP60) family. As to quaternary structure, forms a cylinder of 14 subunits composed of two heptameric rings stacked back-to-back. Interacts with the co-chaperonin GroES.

It localises to the cytoplasm. The catalysed reaction is ATP + H2O + a folded polypeptide = ADP + phosphate + an unfolded polypeptide.. Functionally, together with its co-chaperonin GroES, plays an essential role in assisting protein folding. The GroEL-GroES system forms a nano-cage that allows encapsulation of the non-native substrate proteins and provides a physical environment optimized to promote and accelerate protein folding. In Anaplasma phagocytophilum (strain HZ), this protein is Chaperonin GroEL.